A 384-amino-acid chain; its full sequence is 5-amino-6-(D-ribitylamino)uracil--L-tyrosine 4-hydroxyphenyl transferase 2 (384 aa).

Residues 53–286 (VSYVVNRNIY…IAISRVILHT (234 aa)) form the Radical SAM core domain. Residues Cys67, Cys71, and Cys74 each contribute to the [4Fe-4S] cluster site.

It belongs to the radical SAM superfamily. CofH family. Consists of two subunits, CofG and CofH. [4Fe-4S] cluster serves as cofactor.

The catalysed reaction is 5-amino-6-(D-ribitylamino)uracil + L-tyrosine + S-adenosyl-L-methionine = 5-amino-5-(4-hydroxybenzyl)-6-(D-ribitylimino)-5,6-dihydrouracil + 2-iminoacetate + 5'-deoxyadenosine + L-methionine + H(+). The protein operates within cofactor biosynthesis; coenzyme F0 biosynthesis. Its function is as follows. Catalyzes the radical-mediated synthesis of 5-amino-5-(4-hydroxybenzyl)-6-(D-ribitylimino)-5,6-dihydrouracil from 5-amino-6-(D-ribitylamino)uracil and L-tyrosine. This is 5-amino-6-(D-ribitylamino)uracil--L-tyrosine 4-hydroxyphenyl transferase 2 from Methanosarcina barkeri (strain Fusaro / DSM 804).